The primary structure comprises 137 residues: Small ribosomal subunit protein uS12 (137 aa).

A 3-methylthioaspartic acid modification is found at D89. The tract at residues 104–137 is disordered; the sequence is TAGVNGRKQSRSKYGAKRPKPGQAAAAPAKGKKK. The segment covering 111–123 has biased composition (basic residues); the sequence is KQSRSKYGAKRPK. Positions 124–137 are enriched in low complexity; sequence PGQAAAAPAKGKKK.

Belongs to the universal ribosomal protein uS12 family. Part of the 30S ribosomal subunit. Contacts proteins S8 and S17. May interact with IF1 in the 30S initiation complex.

With S4 and S5 plays an important role in translational accuracy. Its function is as follows. Interacts with and stabilizes bases of the 16S rRNA that are involved in tRNA selection in the A site and with the mRNA backbone. Located at the interface of the 30S and 50S subunits, it traverses the body of the 30S subunit contacting proteins on the other side and probably holding the rRNA structure together. The combined cluster of proteins S8, S12 and S17 appears to hold together the shoulder and platform of the 30S subunit. The chain is Small ribosomal subunit protein uS12 from Cytophaga hutchinsonii (strain ATCC 33406 / DSM 1761 / CIP 103989 / NBRC 15051 / NCIMB 9469 / D465).